Consider the following 1415-residue polypeptide: DNA-directed RNA polymerase subunit beta' (1415 aa).

Residues cysteine 72, cysteine 74, cysteine 87, and cysteine 90 each contribute to the Zn(2+) site. Mg(2+) is bound by residues aspartate 463, aspartate 465, and aspartate 467. Residues cysteine 811, cysteine 885, cysteine 892, and cysteine 895 each coordinate Zn(2+).

It belongs to the RNA polymerase beta' chain family. In terms of assembly, the RNAP catalytic core consists of 2 alpha, 1 beta, 1 beta' and 1 omega subunit. When a sigma factor is associated with the core the holoenzyme is formed, which can initiate transcription. The cofactor is Mg(2+). It depends on Zn(2+) as a cofactor.

It catalyses the reaction RNA(n) + a ribonucleoside 5'-triphosphate = RNA(n+1) + diphosphate. Functionally, DNA-dependent RNA polymerase catalyzes the transcription of DNA into RNA using the four ribonucleoside triphosphates as substrates. The protein is DNA-directed RNA polymerase subunit beta' of Cereibacter sphaeroides (strain ATCC 17023 / DSM 158 / JCM 6121 / CCUG 31486 / LMG 2827 / NBRC 12203 / NCIMB 8253 / ATH 2.4.1.) (Rhodobacter sphaeroides).